Here is a 207-residue protein sequence, read N- to C-terminus: Ribonuclease HII (207 aa).

Residues 12 to 201 enclose the RNase H type-2 domain; the sequence is DLVAGVDEVG…VRAAWEAREG (190 aa). A divalent metal cation is bound by residues Asp18, Glu19, and Asp110.

It belongs to the RNase HII family. It depends on Mn(2+) as a cofactor. Mg(2+) serves as cofactor.

It localises to the cytoplasm. The enzyme catalyses Endonucleolytic cleavage to 5'-phosphomonoester.. Endonuclease that specifically degrades the RNA of RNA-DNA hybrids. This is Ribonuclease HII from Pseudomonas putida (strain ATCC 47054 / DSM 6125 / CFBP 8728 / NCIMB 11950 / KT2440).